The chain runs to 201 residues: Protein FAR-RED-ELONGATED HYPOCOTYL 1-LIKE (201 aa).

The Nuclear localization sequence (NLS) motif lies at 32 to 35 (KKRK). A Nuclear export sequence (NES) motif is present at residues 43–46 (LLPL).

This sequence belongs to the FHY1 protein family. Homodimer and heterodimer with FHY1. Interacts with PHYA, especially upon far-red (FR) light illumination. Binds to LAF1 and HFR1. In terms of processing, inactivated by rapid reversible PHYA-mediated phosphorylation.

Its subcellular location is the nucleus. The protein localises to the cytoplasm. Its function is as follows. Can activate transcription. Essential for light-regulated PHYA nuclear accumulation and subsequent PHYA phototropic signaling processes. PHYA-specific signal transducer in response to continuous FR lights. Mediates the association of PHYA with HFR1 and LAF1 in the nucleus in response to FR conditions. Contributes to inhibition of hypocotyl elongation in continuous blue light (B). In Arabidopsis thaliana (Mouse-ear cress), this protein is Protein FAR-RED-ELONGATED HYPOCOTYL 1-LIKE.